The primary structure comprises 1124 residues: Ras-associating and dilute domain-containing protein (1124 aa).

One can recognise a Ras-associating domain in the interval 61–164; sequence APGVLKIFGD…RRFELRRRAE (104 aa). The disordered stretch occupies residues 226–253; it reads YYSTLPGPIRTRSARDSEIRKERDGGGV. Positions 238–252 are enriched in basic and acidic residues; the sequence is SARDSEIRKERDGGG. An FHA domain is found at 284–342; that stretch reads HTVGQETASARPNICLSSPDVLPLHCRIRRAAQRRSSSDQRLLLEPVAHGNVLVNFMRI. Positions 516–809 constitute a Dilute domain; it reads ASLSLLSISD…VDLLESFENH (294 aa). Disordered stretches follow at residues 850-942 and 960-982; these read THPS…TPPN and PEHA…CMRS. Residues 866-876 show a composition bias toward pro residues; it reads PPQPHSSPHPA. Basic and acidic residues predominate over residues 903–912; sequence AEDRTRDKPT. Residues 926–937 are compositionally biased toward polar residues; that stretch reads ANQSQATDSSCI. A compositionally biased stretch (basic and acidic residues) spans 960–969; it reads PEHASQEHTH. Residues 1027–1112 enclose the PDZ domain; that stretch reads VVDLDKGPYG…RLRFLVAKSD (86 aa).

It belongs to the RADIL family. As to quaternary structure, interacts with RAP1A; in a GTP-dependent manner. As to expression, ubiquitously expressed and enriched in the anterior part of the embryos.

Downstream effector of Rap required for cell adhesion and migration of neural crest precursors during development. The polypeptide is Ras-associating and dilute domain-containing protein (radil) (Danio rerio (Zebrafish)).